Consider the following 93-residue polypeptide: UPF0358 protein BH2626 (93 aa).

It belongs to the UPF0358 family.

The polypeptide is UPF0358 protein BH2626 (Halalkalibacterium halodurans (strain ATCC BAA-125 / DSM 18197 / FERM 7344 / JCM 9153 / C-125) (Bacillus halodurans)).